Reading from the N-terminus, the 102-residue chain is Aspartyl/glutamyl-tRNA(Asn/Gln) amidotransferase subunit C (102 aa).

Belongs to the GatC family. Heterotrimer of A, B and C subunits.

It catalyses the reaction L-glutamyl-tRNA(Gln) + L-glutamine + ATP + H2O = L-glutaminyl-tRNA(Gln) + L-glutamate + ADP + phosphate + H(+). The enzyme catalyses L-aspartyl-tRNA(Asn) + L-glutamine + ATP + H2O = L-asparaginyl-tRNA(Asn) + L-glutamate + ADP + phosphate + 2 H(+). Allows the formation of correctly charged Asn-tRNA(Asn) or Gln-tRNA(Gln) through the transamidation of misacylated Asp-tRNA(Asn) or Glu-tRNA(Gln) in organisms which lack either or both of asparaginyl-tRNA or glutaminyl-tRNA synthetases. The reaction takes place in the presence of glutamine and ATP through an activated phospho-Asp-tRNA(Asn) or phospho-Glu-tRNA(Gln). This is Aspartyl/glutamyl-tRNA(Asn/Gln) amidotransferase subunit C from Bordetella petrii (strain ATCC BAA-461 / DSM 12804 / CCUG 43448).